We begin with the raw amino-acid sequence, 751 residues long: SKI family transcriptional corepressor 1 homolog-B (751 aa).

Disordered regions lie at residues 1-30, 234-267, 386-434, 459-569, and 600-635; these read MESI…SGPP, SRKR…PHKT, LDVS…GIPP, YGNR…HGNK, and QRET…SEER. 2 stretches are compositionally biased toward polar residues: residues 14-27 and 244-259; these read SSCS…QSYS and SESS…TQGE. Basic and acidic residues predominate over residues 416-428; that stretch reads RNEEDKSGDESRS. Positions 479–491 are enriched in low complexity; that stretch reads SESSSYRSVSPDV. Over residues 539–558 the composition is skewed to polar residues; sequence QENTQMHTLNDLHSTNSSET. Composition is skewed to basic and acidic residues over residues 559-569, 603-612, and 620-635; these read RPSDMESHGNK, TSVKDVHEEE, and MEPK…SEER. A coiled-coil region spans residues 666 to 704; that stretch reads SMAKEELQKQLVEQVELRKKLEREFQNLKDSFQDQMKRE.

This sequence belongs to the SKI family.

It localises to the nucleus. In terms of biological role, may inhibit BMP signaling. The protein is SKI family transcriptional corepressor 1 homolog-B (skor1b) of Danio rerio (Zebrafish).